Consider the following 371-residue polypeptide: LIM domain-binding protein 2 (371 aa).

Disordered regions lie at residues 244–289 and 325–371; these read APPA…AAAN and QYDA…QASQ. The span at 263–289 shows a compositional bias: low complexity; that stretch reads STSSTSNSSAGNNANSTNSKKKSAAAN. Residues 296 to 335 enclose the LIM interaction domain (LID) domain; the sequence is DVMVVGEPTLMGGEFGDEDERLITRLENTQYDAANGMDDE. Over residues 339–371 the composition is skewed to polar residues; it reads NNSPALGNNSPWNSKPPANQETKSENPTPQASQ.

The protein belongs to the LDB family. First expressed at stages 15-16 in presumptive limb mesoderm. As limb outgrowth proceeds, expressed in the entire limb bud, concentrating in the distal mesoderm throughout limb development. Both hindlimbs and forelimbs exhibit similar expression patterns.

Its subcellular location is the nucleus. Binds to the LIM domain of a wide variety of LIM domain-containing transcription factors. The sequence is that of LIM domain-binding protein 2 (LDB2) from Gallus gallus (Chicken).